The primary structure comprises 331 residues: Holliday junction branch migration complex subunit RuvB (331 aa).

The large ATPase domain (RuvB-L) stretch occupies residues 4–182; that stretch reads KDILQSSECI…FGIPMHLEFY (179 aa). ATP-binding positions include R22, G63, K66, T67, T68, 129–131, R172, Y182, and R219; that span reads EDF. Residue T67 participates in Mg(2+) binding. Positions 183–253 are small ATPAse domain (RuvB-S); the sequence is STEELTKVIK…FADQALLRLG (71 aa). The interval 256–331 is head domain (RuvB-H); the sequence is KLGLDRQDIK…SYLNEQTYNM (76 aa). Residues R309 and R314 each coordinate DNA.

This sequence belongs to the RuvB family. In terms of assembly, homohexamer. Forms an RuvA(8)-RuvB(12)-Holliday junction (HJ) complex. HJ DNA is sandwiched between 2 RuvA tetramers; dsDNA enters through RuvA and exits via RuvB. An RuvB hexamer assembles on each DNA strand where it exits the tetramer. Each RuvB hexamer is contacted by two RuvA subunits (via domain III) on 2 adjacent RuvB subunits; this complex drives branch migration. In the full resolvosome a probable DNA-RuvA(4)-RuvB(12)-RuvC(2) complex forms which resolves the HJ.

The protein localises to the cytoplasm. The catalysed reaction is ATP + H2O = ADP + phosphate + H(+). In terms of biological role, the RuvA-RuvB-RuvC complex processes Holliday junction (HJ) DNA during genetic recombination and DNA repair, while the RuvA-RuvB complex plays an important role in the rescue of blocked DNA replication forks via replication fork reversal (RFR). RuvA specifically binds to HJ cruciform DNA, conferring on it an open structure. The RuvB hexamer acts as an ATP-dependent pump, pulling dsDNA into and through the RuvAB complex. RuvB forms 2 homohexamers on either side of HJ DNA bound by 1 or 2 RuvA tetramers; 4 subunits per hexamer contact DNA at a time. Coordinated motions by a converter formed by DNA-disengaged RuvB subunits stimulates ATP hydrolysis and nucleotide exchange. Immobilization of the converter enables RuvB to convert the ATP-contained energy into a lever motion, pulling 2 nucleotides of DNA out of the RuvA tetramer per ATP hydrolyzed, thus driving DNA branch migration. The RuvB motors rotate together with the DNA substrate, which together with the progressing nucleotide cycle form the mechanistic basis for DNA recombination by continuous HJ branch migration. Branch migration allows RuvC to scan DNA until it finds its consensus sequence, where it cleaves and resolves cruciform DNA. The protein is Holliday junction branch migration complex subunit RuvB of Ehrlichia ruminantium (strain Gardel).